A 355-amino-acid polypeptide reads, in one-letter code: Uroporphyrinogen decarboxylase (355 aa).

Residues 27 to 31 (RQAGR), D77, Y154, T209, and H328 contribute to the substrate site.

It belongs to the uroporphyrinogen decarboxylase family. Homodimer.

The protein resides in the cytoplasm. The enzyme catalyses uroporphyrinogen III + 4 H(+) = coproporphyrinogen III + 4 CO2. The protein operates within porphyrin-containing compound metabolism; protoporphyrin-IX biosynthesis; coproporphyrinogen-III from 5-aminolevulinate: step 4/4. In terms of biological role, catalyzes the decarboxylation of four acetate groups of uroporphyrinogen-III to yield coproporphyrinogen-III. The chain is Uroporphyrinogen decarboxylase from Aliivibrio salmonicida (strain LFI1238) (Vibrio salmonicida (strain LFI1238)).